Reading from the N-terminus, the 146-residue chain is Angiogenin (146 aa).

An N-terminal signal peptide occupies residues 1 to 24; the sequence is MVMGLGLFLLVFMLGLGLTPPTLA. Q25 is subject to Pyrrolidone carboxylic acid. The Proton acceptor role is filled by H37. R45 serves as a coordination point for tRNA. 3 disulfide bridges follow: C50-C105, C63-C116, and C81-C131. A Nucleolar localization signal motif is present at residues 55–59; sequence RRRHL. The tRNA site is built by C105 and I127. H138 serves as the catalytic Proton donor.

Belongs to the pancreatic ribonuclease family. As to quaternary structure, homodimer. Interacts with RNH1; inhibiting ANG ribonuclease activity. Interacts with PCNA.

It localises to the secreted. Its subcellular location is the nucleus. The protein resides in the nucleolus. The protein localises to the cytoplasm. It is found in the stress granule. With respect to regulation, has weak tRNA ribonuclease activity by itself due to partial autoinhibition by its C-terminus, which folds into a short alpha-helix that partially occludes the substrate-binding site. In absence of stress, the ribonuclease activity is inhibited by RNH1 in the cytoplasm. In response to stress, dissociates from RNH1 in the cytoplasm and associates with cytoplasmic ribosomes with vacant A-sites: ribosomes directly activate the tRNA ribonuclease activity of ANG by refolding the C-terminal alpha-helix. In response to stress, the angiogenic activity of ANG is inhibited by RNH1 in the nucleus. Its function is as follows. Secreted ribonuclease that can either promote or restrict cell proliferation of target cells, depending on the context. Endocytosed in target cells via its receptor PLXNB2 and translocates to the cytoplasm or nucleus. Under stress conditions, localizes to the cytoplasm and promotes the assembly of stress granules (SGs): specifically cleaves a subset of tRNAs within anticodon loops to produce tRNA-derived stress-induced fragments (tiRNAs), resulting in translation repression and inhibition of cell proliferation. tiRNas also prevent formation of apoptosome, thereby promoting cell survival. Preferentially cleaves RNAs between a pyrimidine and an adenosine residue, suggesting that it cleaves the anticodon loop of tRNA(Ala) (32-UUAGCAU-38) after positions 33 and 36. Cleaves a subset of tRNAs, including tRNA(Ala), tRNA(Glu), tRNA(Gly), tRNA(Lys), tRNA(Val), tRNA(His), tRNA(Asp) and tRNA(Sec). Under growth conditions and in differentiated cells, translocates to the nucleus and stimulates ribosomal RNA (rRNA) transcription, including that containing the initiation site sequences of 45S rRNA, thereby promoting cell growth and proliferation. Angiogenin induces vascularization of normal and malignant tissues via its ability to promote rRNA transcription. Involved in hematopoietic stem and progenitor cell (HSPC) growth and survival by promoting rRNA transcription in growth conditions and inhibiting translation in response to stress, respectively. Mediates the crosstalk between myeloid and intestinal epithelial cells to protect the intestinal epithelial barrier integrity: secreted by myeloid cells and promotes intestinal epithelial cells proliferation and survival. Also mediates osteoclast-endothelial cell crosstalk in growing bone: produced by osteoclasts and protects the neighboring vascular cells against senescence by promoting rRNA transcription. This Macaca mulatta (Rhesus macaque) protein is Angiogenin (ANG).